Reading from the N-terminus, the 335-residue chain is Holliday junction branch migration complex subunit RuvB (335 aa).

The segment at 4–184 (ADRLIQPTAL…FGIVQRLEFY (181 aa)) is large ATPase domain (RuvB-L). ATP contacts are provided by residues isoleucine 23, arginine 24, glycine 65, lysine 68, threonine 69, threonine 70, 131 to 133 (EDY), arginine 174, tyrosine 184, and arginine 221. Threonine 69 is a Mg(2+) binding site. The tract at residues 185 to 255 (NIKDLTQIVK…VASAALDMLD (71 aa)) is small ATPAse domain (RuvB-S). The head domain (RuvB-H) stretch occupies residues 258-335 (KEGFDYMDRK…LHFGYDYEPN (78 aa)). DNA is bound by residues arginine 294, arginine 313, and arginine 318.

Belongs to the RuvB family. Homohexamer. Forms an RuvA(8)-RuvB(12)-Holliday junction (HJ) complex. HJ DNA is sandwiched between 2 RuvA tetramers; dsDNA enters through RuvA and exits via RuvB. An RuvB hexamer assembles on each DNA strand where it exits the tetramer. Each RuvB hexamer is contacted by two RuvA subunits (via domain III) on 2 adjacent RuvB subunits; this complex drives branch migration. In the full resolvosome a probable DNA-RuvA(4)-RuvB(12)-RuvC(2) complex forms which resolves the HJ.

It localises to the cytoplasm. The enzyme catalyses ATP + H2O = ADP + phosphate + H(+). In terms of biological role, the RuvA-RuvB-RuvC complex processes Holliday junction (HJ) DNA during genetic recombination and DNA repair, while the RuvA-RuvB complex plays an important role in the rescue of blocked DNA replication forks via replication fork reversal (RFR). RuvA specifically binds to HJ cruciform DNA, conferring on it an open structure. The RuvB hexamer acts as an ATP-dependent pump, pulling dsDNA into and through the RuvAB complex. RuvB forms 2 homohexamers on either side of HJ DNA bound by 1 or 2 RuvA tetramers; 4 subunits per hexamer contact DNA at a time. Coordinated motions by a converter formed by DNA-disengaged RuvB subunits stimulates ATP hydrolysis and nucleotide exchange. Immobilization of the converter enables RuvB to convert the ATP-contained energy into a lever motion, pulling 2 nucleotides of DNA out of the RuvA tetramer per ATP hydrolyzed, thus driving DNA branch migration. The RuvB motors rotate together with the DNA substrate, which together with the progressing nucleotide cycle form the mechanistic basis for DNA recombination by continuous HJ branch migration. Branch migration allows RuvC to scan DNA until it finds its consensus sequence, where it cleaves and resolves cruciform DNA. This chain is Holliday junction branch migration complex subunit RuvB, found in Pseudoalteromonas atlantica (strain T6c / ATCC BAA-1087).